Reading from the N-terminus, the 412-residue chain is Multifunctional CCA protein (412 aa).

Glycine 8 and arginine 11 together coordinate ATP. Positions 8 and 11 each coordinate CTP. Mg(2+) is bound by residues aspartate 21 and aspartate 23. Arginine 91, arginine 137, and arginine 140 together coordinate ATP. Arginine 91, arginine 137, and arginine 140 together coordinate CTP. The HD domain maps to 228 to 329; sequence TGIHTLMTLS…VKLFDSIDAW (102 aa).

It belongs to the tRNA nucleotidyltransferase/poly(A) polymerase family. Bacterial CCA-adding enzyme type 1 subfamily. As to quaternary structure, monomer. Can also form homodimers and oligomers. Requires Mg(2+) as cofactor. It depends on Ni(2+) as a cofactor.

It catalyses the reaction a tRNA precursor + 2 CTP + ATP = a tRNA with a 3' CCA end + 3 diphosphate. The enzyme catalyses a tRNA with a 3' CCA end + 2 CTP + ATP = a tRNA with a 3' CCACCA end + 3 diphosphate. Its function is as follows. Catalyzes the addition and repair of the essential 3'-terminal CCA sequence in tRNAs without using a nucleic acid template. Adds these three nucleotides in the order of C, C, and A to the tRNA nucleotide-73, using CTP and ATP as substrates and producing inorganic pyrophosphate. tRNA 3'-terminal CCA addition is required both for tRNA processing and repair. Also involved in tRNA surveillance by mediating tandem CCA addition to generate a CCACCA at the 3' terminus of unstable tRNAs. While stable tRNAs receive only 3'-terminal CCA, unstable tRNAs are marked with CCACCA and rapidly degraded. The polypeptide is Multifunctional CCA protein (Shigella flexneri serotype 5b (strain 8401)).